Here is a 146-residue protein sequence, read N- to C-terminus: D-aminoacyl-tRNA deacylase (146 aa).

The short motif at 137–138 (GP) is the Gly-cisPro motif, important for rejection of L-amino acids element.

This sequence belongs to the DTD family. In terms of assembly, homodimer.

The protein localises to the cytoplasm. It catalyses the reaction glycyl-tRNA(Ala) + H2O = tRNA(Ala) + glycine + H(+). The enzyme catalyses a D-aminoacyl-tRNA + H2O = a tRNA + a D-alpha-amino acid + H(+). In terms of biological role, an aminoacyl-tRNA editing enzyme that deacylates mischarged D-aminoacyl-tRNAs. Also deacylates mischarged glycyl-tRNA(Ala), protecting cells against glycine mischarging by AlaRS. Acts via tRNA-based rather than protein-based catalysis; rejects L-amino acids rather than detecting D-amino acids in the active site. By recycling D-aminoacyl-tRNA to D-amino acids and free tRNA molecules, this enzyme counteracts the toxicity associated with the formation of D-aminoacyl-tRNA entities in vivo and helps enforce protein L-homochirality. This chain is D-aminoacyl-tRNA deacylase, found in Variovorax paradoxus (strain S110).